A 550-amino-acid chain; its full sequence is Probable terpene synthase 2 (550 aa).

Mg(2+) contacts are provided by D305, D309, and E457. Positions 305–309 (DDIYD) match the DDXXD motif motif.

It belongs to the terpene synthase family. It depends on Mg(2+) as a cofactor.

Probable sesquiterpene synthase. This is Probable terpene synthase 2 (TPS2) from Ricinus communis (Castor bean).